The chain runs to 209 residues: ATP synthase subunit b 2 (209 aa).

Residues 9 to 29 (WWGWVTLSVLVMVAGDGTLAF) traverse the membrane as a helical segment.

This sequence belongs to the ATPase B chain family. In terms of assembly, F-type ATPases have 2 components, F(1) - the catalytic core - and F(0) - the membrane proton channel. F(1) has five subunits: alpha(3), beta(3), gamma(1), delta(1), epsilon(1). F(0) has three main subunits: a(1), b(2) and c(10-14). The alpha and beta chains form an alternating ring which encloses part of the gamma chain. F(1) is attached to F(0) by a central stalk formed by the gamma and epsilon chains, while a peripheral stalk is formed by the delta and b chains.

It localises to the cell inner membrane. Its function is as follows. F(1)F(0) ATP synthase produces ATP from ADP in the presence of a proton or sodium gradient. F-type ATPases consist of two structural domains, F(1) containing the extramembraneous catalytic core and F(0) containing the membrane proton channel, linked together by a central stalk and a peripheral stalk. During catalysis, ATP synthesis in the catalytic domain of F(1) is coupled via a rotary mechanism of the central stalk subunits to proton translocation. Functionally, component of the F(0) channel, it forms part of the peripheral stalk, linking F(1) to F(0). The protein is ATP synthase subunit b 2 of Desulfosudis oleivorans (strain DSM 6200 / JCM 39069 / Hxd3) (Desulfococcus oleovorans).